We begin with the raw amino-acid sequence, 223 residues long: Cell division protein SepF (223 aa).

Residues 19-81 form a disordered region; it reads YDDEYYDDRG…YPPPGGYRGG (63 aa). Basic and acidic residues predominate over residues 36–69; that stretch reads PRFEDDYGRYEGRDFEDPRRDPRAGMRADLRGEP.

This sequence belongs to the SepF family. Homodimer. Interacts with FtsZ.

The protein localises to the cytoplasm. Cell division protein that is part of the divisome complex and is recruited early to the Z-ring. Probably stimulates Z-ring formation, perhaps through the cross-linking of FtsZ protofilaments. Its function overlaps with FtsA. The chain is Cell division protein SepF from Mycobacterium ulcerans (strain Agy99).